Here is a 618-residue protein sequence, read N- to C-terminus: DNA mismatch repair protein MutL (618 aa).

The protein belongs to the DNA mismatch repair MutL/HexB family.

Its function is as follows. This protein is involved in the repair of mismatches in DNA. It is required for dam-dependent methyl-directed DNA mismatch repair. May act as a 'molecular matchmaker', a protein that promotes the formation of a stable complex between two or more DNA-binding proteins in an ATP-dependent manner without itself being part of a final effector complex. This chain is DNA mismatch repair protein MutL, found in Porphyromonas gingivalis (strain ATCC 33277 / DSM 20709 / CIP 103683 / JCM 12257 / NCTC 11834 / 2561).